A 616-amino-acid chain; its full sequence is Prolactin receptor (616 aa).

Residues 1-24 (MKENVASMIVFLLLLFLNIRLLKG) form the signal peptide. At 25-234 (QSPPGKPFIF…QIPNDFTMKD (210 aa)) the chain is on the extracellular side. Fibronectin type-III domains lie at 27-128 (PPGK…VEPD) and 129-229 (PPVN…IPND). Residues C36 and C46 are joined by a disulfide bond. N59 carries an N-linked (GlcNAc...) asparagine glycan. An intrachain disulfide couples C75 to C86. Residues N104 and N132 are each glycosylated (N-linked (GlcNAc...) asparagine). The Zn(2+) site is built by D211 and H212. The short motif at 215–219 (WSVWS) is the WSXWS motif element. The helical transmembrane segment at 235 to 258 (ITVWIFVAVLSTIICLIMVWAVAL) threads the bilayer. Topologically, residues 259–616 (KGYSMVTCIF…DPACFMHSLH (358 aa)) are cytoplasmic. The Box 1 motif motif lies at 267–275 (IFPPVPGPK). Disordered stretches follow at residues 326 to 375 (MPAH…STFH), 454 to 492 (QSSK…PKEK), and 568 to 593 (ESTK…STAP). Residues 463-482 (GEEKATKQREVESSHSKAEQ) show a composition bias toward basic and acidic residues.

Belongs to the type I cytokine receptor family. Type 1 subfamily. In terms of assembly, interacts with SMARCA1. Interacts with NEK3 and VAV2 and this interaction is prolactin-dependent.

The protein localises to the membrane. Functionally, this is a receptor for the anterior pituitary hormone prolactin. In Oryctolagus cuniculus (Rabbit), this protein is Prolactin receptor (PRLR).